Reading from the N-terminus, the 445-residue chain is D-serine transporter DsdX (445 aa).

12 helical membrane passes run 5 to 25, 29 to 49, 57 to 77, 106 to 126, 140 to 160, 178 to 198, 224 to 244, 265 to 285, 302 to 322, 343 to 363, 385 to 405, and 425 to 445; these read IWVV…IVKF, PFLA…MGPL, SGIG…TILG, VLVG…VLLI, LLKL…VVPP, VIVY…PLFL, TLPS…LMLV, IGNP…VLGI, FGSI…NAIL, ILLA…ATVA, IIAI…DSLF, and TATF…SFII.

It belongs to the GntP permease family.

It is found in the cell inner membrane. Its activity is regulated as follows. Uptake of D-serine is inhibited by carbonyl cyanide m-chlorophenylhydrazone (CCCP), and at high concentrations of D-threonine, stimulated by D-cycloserine and not affected by D-alanine or glycine. In terms of biological role, protein that allows transport of D-serine across the inner membrane, does not transport D-alanine nor probably glycine. Is probably a H(+) symporter, as CCCP inhibits transport. Transports D-serine more efficiently than CycA. This chain is D-serine transporter DsdX (dsdX), found in Escherichia coli O6:H1 (strain CFT073 / ATCC 700928 / UPEC).